A 112-amino-acid polypeptide reads, in one-letter code: Putative pterin-4-alpha-carbinolamine dehydratase (112 aa).

This sequence belongs to the pterin-4-alpha-carbinolamine dehydratase family.

The catalysed reaction is (4aS,6R)-4a-hydroxy-L-erythro-5,6,7,8-tetrahydrobiopterin = (6R)-L-erythro-6,7-dihydrobiopterin + H2O. This Shewanella putrefaciens (strain CN-32 / ATCC BAA-453) protein is Putative pterin-4-alpha-carbinolamine dehydratase.